Reading from the N-terminus, the 210-residue chain is Small ribosomal subunit protein uS3 (210 aa).

One can recognise a KH type-2 domain in the interval 38 to 106; it reads LRSFLKKRLY…EVYLNIQEVR (69 aa).

This sequence belongs to the universal ribosomal protein uS3 family. In terms of assembly, part of the 30S ribosomal subunit. Forms a tight complex with proteins S10 and S14.

Its function is as follows. Binds the lower part of the 30S subunit head. Binds mRNA in the 70S ribosome, positioning it for translation. This chain is Small ribosomal subunit protein uS3, found in Geotalea uraniireducens (strain Rf4) (Geobacter uraniireducens).